A 213-amino-acid polypeptide reads, in one-letter code: Orotate phosphoribosyltransferase (213 aa).

K26 serves as a coordination point for 5-phospho-alpha-D-ribose 1-diphosphate. 34 to 35 lines the orotate pocket; the sequence is FF. 5-phospho-alpha-D-ribose 1-diphosphate contacts are provided by residues 72–73, R99, K100, K103, H105, and 124–132; these read YK and DDVITAGTA. Positions 128 and 156 each coordinate orotate.

This sequence belongs to the purine/pyrimidine phosphoribosyltransferase family. PyrE subfamily. In terms of assembly, homodimer. It depends on Mg(2+) as a cofactor.

It carries out the reaction orotidine 5'-phosphate + diphosphate = orotate + 5-phospho-alpha-D-ribose 1-diphosphate. Its pathway is pyrimidine metabolism; UMP biosynthesis via de novo pathway; UMP from orotate: step 1/2. Functionally, catalyzes the transfer of a ribosyl phosphate group from 5-phosphoribose 1-diphosphate to orotate, leading to the formation of orotidine monophosphate (OMP). The protein is Orotate phosphoribosyltransferase of Saccharophagus degradans (strain 2-40 / ATCC 43961 / DSM 17024).